Consider the following 327-residue polypeptide: Malate dehydrogenase (327 aa).

12–18 (GAAGQIG) serves as a coordination point for NAD(+). Substrate contacts are provided by Arg-93 and Arg-99. NAD(+)-binding positions include Asn-106, Gln-113, and 130 to 132 (VGN). Substrate contacts are provided by Asn-132 and Arg-163. Residue His-188 is the Proton acceptor of the active site.

The protein belongs to the LDH/MDH superfamily. MDH type 2 family.

It carries out the reaction (S)-malate + NAD(+) = oxaloacetate + NADH + H(+). In terms of biological role, catalyzes the reversible oxidation of malate to oxaloacetate. The chain is Malate dehydrogenase from Paraburkholderia phymatum (strain DSM 17167 / CIP 108236 / LMG 21445 / STM815) (Burkholderia phymatum).